Consider the following 472-residue polypeptide: GTPase Der (472 aa).

EngA-type G domains follow at residues 3–166 (AVIA…PPAE) and 178–351 (IPVA…AAAH). Residues 9–16 (GRPNVGKS), 56–60 (DTGGM), 118–121 (NKTD), 184–191 (GRPNVGKS), 231–235 (DTAGV), and 296–299 (NKWD) each bind GTP. Residues 352–436 (RDLATPELND…PVRIECRASD (85 aa)) form the KH-like domain. The segment at 434–472 (ASDNPFADKPNQLTERQRRRRQRVIHHAKKREKKRKRRR) is disordered. A compositionally biased stretch (basic residues) spans 450-472 (QRRRRQRVIHHAKKREKKRKRRR).

This sequence belongs to the TRAFAC class TrmE-Era-EngA-EngB-Septin-like GTPase superfamily. EngA (Der) GTPase family. Associates with the 50S ribosomal subunit.

Functionally, GTPase that plays an essential role in the late steps of ribosome biogenesis. The protein is GTPase Der of Halorhodospira halophila (strain DSM 244 / SL1) (Ectothiorhodospira halophila (strain DSM 244 / SL1)).